Reading from the N-terminus, the 440-residue chain is SET domain-containing protein 4 (440 aa).

The span at 1–16 (MQKGKGRTSRIRRRKL) shows a compositional bias: basic residues. The interval 1-24 (MQKGKGRTSRIRRRKLCGSSESRG) is disordered. The region spanning 48–273 (SNLAPACFPG…KHEEVFICYG (226 aa)) is the SET domain. Y272 is a binding site for S-adenosyl-L-methionine.

Belongs to the class V-like SAM-binding methyltransferase superfamily. SETD4 family. As to quaternary structure, forms a ternary complex with TBK1 and ZNF268; the interaction with TBK1 is ZNF268-dependent and leads to TBK1 monomethylation.

It localises to the cytoplasm. The protein localises to the cytosol. It is found in the nucleus. It carries out the reaction L-lysyl(4)-[histone H3] + S-adenosyl-L-methionine = N(6)-methyl-L-lysyl(4)-[histone H3] + S-adenosyl-L-homocysteine + H(+). It catalyses the reaction N(6)-methyl-L-lysyl(4)-[histone H3] + S-adenosyl-L-methionine = N(6),N(6)-dimethyl-L-lysyl(4)-[histone H3] + S-adenosyl-L-homocysteine + H(+). The catalysed reaction is L-lysyl(20)-[histone H4] + S-adenosyl-L-methionine = N(6)-methyl-L-lysyl(20)-[histone H4] + S-adenosyl-L-homocysteine + H(+). The enzyme catalyses N(6)-methyl-L-lysyl(20)-[histone H4] + S-adenosyl-L-methionine = N(6),N(6)-dimethyl-L-lysyl(20)-[histone H4] + S-adenosyl-L-homocysteine + H(+). It carries out the reaction N(6),N(6)-dimethyl-L-lysyl(20)-[histone H4] + S-adenosyl-L-methionine = N(6),N(6),N(6)-trimethyl-L-lysyl(20)-[histone H4] + S-adenosyl-L-homocysteine + H(+). It catalyses the reaction L-lysyl-[protein] + S-adenosyl-L-methionine = N(6)-methyl-L-lysyl-[protein] + S-adenosyl-L-homocysteine + H(+). Protein-lysine N-methyltransferase that methylates both histones and non-histone proteins. Via its catalytic activity, regulates many processes, including cell proliferation, cell differentiation, inflammatory response and apoptosis. Regulates the inflammatory response by mediating mono- and dimethylation of 'Lys-4' of histone H3 (H3K4me1 and H3K4me2, respectively), leading to activate the transcription of pro-inflammatory cytokines IL6 and TNF-alpha. Through the catalysis of TBK1 monomethylation, may regulate virus-induced interferon signaling. TBK1 monomethylation enhances its interaction with MAVS, STING and IRF3, hence promoting antiviral interferon signaling. Also involved in the regulation of stem cell quiescence by catalyzing the trimethylation of 'Lys-20' of histone H4 (H4K20me3), thereby promoting heterochromatin formation. In the brain, epigenetically controls quiescence of neural stem cells for sustaining a protected neural stem cell population and maintaining a stem cell reservoir for neurogenesis. Involved in proliferation, migration, paracrine and myogenic differentiation of bone marrow mesenchymal stem cells (BMSCs). Through the catalysis of XRCC5/Ku70 trimethylation, regulates BAX-mediated apoptosis. SETD4-catalyzed XRCC5 methylation results in XRCC5 translocation to the cytoplasm, where it interacts with BAX, sequestering it from the mitochondria, hence preventing BAX-mediated apoptosis. This is SET domain-containing protein 4 from Homo sapiens (Human).